Here is a 118-residue protein sequence, read N- to C-terminus: Membrane-anchored ubiquitin-fold protein 3 (118 aa).

Residues 7 to 73 (IDIKFRLYDG…LENNKTVGQC (67 aa)) form the Ubiquitin-like domain. Cys113 carries S-palmitoyl cysteine lipidation. Cys115 is subject to Cysteine methyl ester. Cys115 carries the S-geranylgeranyl cysteine lipid modification. Residues 116–118 (TIL) constitute a propeptide, removed in mature form.

As to expression, ubiquitous, but three fold higher expression in senescing leaves.

It is found in the cell membrane. May serve as docking site to facilitate the association of other proteins to the plasma membrane. The chain is Membrane-anchored ubiquitin-fold protein 3 (MUB3) from Arabidopsis thaliana (Mouse-ear cress).